Here is a 1199-residue protein sequence, read N- to C-terminus: Major DNA-binding protein (1199 aa).

A disordered region spans residues 289–314; the sequence is SGTTTARGARRNDVNSTSKPSPSGGF. A zinc finger lies at 497-510; that stretch reads CSLCEKHTRPVCAH. Short sequence motifs (required for filament formation) lie at residues 841 to 842 and 1146 to 1148; these read FW and FNF. A required for nuclear localization region spans residues 1172-1199; the sequence is LKRPPEDDELFDLSGIPIKHGNITMEMI.

This sequence belongs to the herpesviridae major DNA-binding protein family. Homooligomers. Forms double-helical filaments necessary for the formation of replication compartments within the host nucleus. Interacts with the origin-binding protein. Interacts with the helicase primase complex; this interaction stimulates primer synthesis activity of the helicase-primase complex. Interacts with the DNA polymerase. Interacts with the alkaline exonuclease; this interaction increases its nuclease processivity.

Its subcellular location is the host nucleus. In terms of biological role, plays several crucial roles in viral infection. Participates in the opening of the viral DNA origin to initiate replication by interacting with the origin-binding protein. May disrupt loops, hairpins and other secondary structures present on ssDNA to reduce and eliminate pausing of viral DNA polymerase at specific sites during elongation. Promotes viral DNA recombination by performing strand-transfer, characterized by the ability to transfer a DNA strand from a linear duplex to a complementary single-stranded DNA circle. Can also catalyze the renaturation of complementary single strands. Additionally, reorganizes the host cell nucleus, leading to the formation of prereplicative sites and replication compartments. This process is driven by the protein which can form double-helical filaments in the absence of DNA. The polypeptide is Major DNA-binding protein (Varicella-zoster virus (strain Oka vaccine) (HHV-3)).